The chain runs to 670 residues: Transcriptional regulatory protein DOT6 (670 aa).

Residues 1–44 are compositionally biased toward polar residues; sequence MSISTSLNSASIHLSSMDTHPQLHSLTRQPHSSSTAMSKNEAQE. The tract at residues 1–78 is disordered; it reads MSISTSLNSA…SKNPSSWDPQ (78 aa). Low complexity predominate over residues 45–74; the sequence is SSPSLPASSSSSTSASASASSKNSSKNPSS. The HTH myb-type domain maps to 67–121; the sequence is NSSKNPSSWDPQDDLLLRHLKEVKKMGWKDISQYFPNRTPNACQFRWRRLKSGNL. Positions 94–117 form a DNA-binding region, H-T-H motif; sequence WKDISQYFPNRTPNACQFRWRRLK. The span at 226–242 shows a compositional bias: basic residues; that stretch reads HHPHQHLHHHPHHKTLK. Disordered stretches follow at residues 226–250, 293–332, 406–436, and 483–659; these read HHPH…SHSF, TTPS…NTSR, HSSS…CNPT, and ADML…NSPL. Ser245 and Ser247 each carry phosphoserine. Composition is skewed to low complexity over residues 295–307 and 316–332; these read PSSP…LLSS and NWSR…NTSR. The segment covering 425-436 has biased composition (polar residues); sequence SGHSMKSSCNPT. Ser487 is modified (phosphoserine). A Phosphothreonine modification is found at Thr489. Position 491 is a phosphoserine (Ser491). A compositionally biased stretch (basic and acidic residues) spans 512–522; sequence DDDKGSDKEDV. Composition is skewed to low complexity over residues 544–561 and 587–598; these read SSNK…SSKD and TITSDTSSSAAT. Positions 599-608 are enriched in polar residues; it reads MNRTPNSKNP. The span at 622–659 shows a compositional bias: low complexity; sequence ITPRPKPSSTTTSITTETTNNMINHSSSTTTTTNNSPL.

This sequence belongs to the DOT6 family. Component of the RPD3C(L) complex composed of at least ASH1, CTI6, DEP1, DOT6, PHO23, RPD3, RXT2, RXT3, SAP30, SDS3, SIN3, TOD6; UME1 and UME6.

It is found in the nucleus. Its function is as follows. Component of the RPD3 histone deacetylase complex RPD3C(L) responsible for the deacetylation of lysine residues on the N-terminal part of the core histones (H2A, H2B, H3 and H4). Histone deacetylation gives a tag for epigenetic repression and plays an important role in transcriptional regulation, cell cycle progression and developmental events. DOT6 binds to sequences containing the core CGATG, which resembles the PAC (Polymerase A and C) motif. The protein is Transcriptional regulatory protein DOT6 (DOT6) of Saccharomyces cerevisiae (strain ATCC 204508 / S288c) (Baker's yeast).